A 61-amino-acid polypeptide reads, in one-letter code: Small ribosomal subunit protein uS14 (61 aa).

Zn(2+) contacts are provided by C24, C27, C40, and C43.

It belongs to the universal ribosomal protein uS14 family. Zinc-binding uS14 subfamily. As to quaternary structure, part of the 30S ribosomal subunit. Contacts proteins S3 and S10. The cofactor is Zn(2+).

Functionally, binds 16S rRNA, required for the assembly of 30S particles and may also be responsible for determining the conformation of the 16S rRNA at the A site. In Clostridium kluyveri (strain NBRC 12016), this protein is Small ribosomal subunit protein uS14.